We begin with the raw amino-acid sequence, 180 residues long: Adenine phosphoribosyltransferase (180 aa).

This sequence belongs to the purine/pyrimidine phosphoribosyltransferase family. As to quaternary structure, homodimer.

The protein localises to the cytoplasm. The enzyme catalyses AMP + diphosphate = 5-phospho-alpha-D-ribose 1-diphosphate + adenine. Its pathway is purine metabolism; AMP biosynthesis via salvage pathway; AMP from adenine: step 1/1. In terms of biological role, catalyzes a salvage reaction resulting in the formation of AMP, that is energically less costly than de novo synthesis. The protein is Adenine phosphoribosyltransferase of Butyrivibrio fibrisolvens.